The chain runs to 972 residues: mRNA transport regulator MTR10 (972 aa).

The protein localises to the nucleus. Involved in mRNA transport from nucleus to cytoplasm. The sequence is that of mRNA transport regulator MTR10 (MTR10) from Saccharomyces cerevisiae (strain ATCC 204508 / S288c) (Baker's yeast).